A 215-amino-acid chain; its full sequence is E3 ubiquitin-protein ligase NleG (215 aa).

Residues 136–189 (CPITLCIPETGVFVRNAKNSEICSLYDHNALTELIRRNAPHPLSREPFVPEMIV) are RING/U-box domain. Positions 213–215 (TRI) match the PDZ-binding motif motif.

Belongs to the NleG E3 ligase family. As to quaternary structure, interacts with host GOPC (human protein). Two sizes of protein are detected upon expression in C.rodentium; only the smaller protein is secreted.

The protein localises to the secreted. The protein resides in the host cytoplasm. It carries out the reaction S-ubiquitinyl-[E2 ubiquitin-conjugating enzyme]-L-cysteine + [acceptor protein]-L-lysine = [E2 ubiquitin-conjugating enzyme]-L-cysteine + N(6)-ubiquitinyl-[acceptor protein]-L-lysine.. Effector proteins function to alter host cell physiology and promote bacterial survival in host tissues. This protein is an E3 ubiquitin-protein ligase that probably interferes with the host's ubiquitination pathway and targets host proteins for proteasomal degradation. Can ubiquitinate ubiquitin, giving rise to polyubiquitin chains (in vitro). Does not complement an nleG8 deletion in C.rodentium. The protein is E3 ubiquitin-protein ligase NleG of Escherichia coli O157:H7.